Reading from the N-terminus, the 537-residue chain is Exodeoxyribonuclease 7 large subunit (537 aa).

A disordered region spans residues 508–537 (GEGAPVEPPQAARPSKGARTKAAQPSLFDD).

This sequence belongs to the XseA family. In terms of assembly, heterooligomer composed of large and small subunits.

Its subcellular location is the cytoplasm. It carries out the reaction Exonucleolytic cleavage in either 5'- to 3'- or 3'- to 5'-direction to yield nucleoside 5'-phosphates.. Functionally, bidirectionally degrades single-stranded DNA into large acid-insoluble oligonucleotides, which are then degraded further into small acid-soluble oligonucleotides. The sequence is that of Exodeoxyribonuclease 7 large subunit from Azorhizobium caulinodans (strain ATCC 43989 / DSM 5975 / JCM 20966 / LMG 6465 / NBRC 14845 / NCIMB 13405 / ORS 571).